A 416-amino-acid polypeptide reads, in one-letter code: MNFFLYFRTIFLIQLYFFNYSTFGCSASSTSVQSDTTNQVSVSCPKYTTIYTSGTSPDTKTIYPESTSTKSITTSTQSHSSPVIVVSTVGTVTETTISGSTEYTTTIPAEGITSGTVEIVEPTAGTVTETITSGTLPFTTTLAQASGTVSGTVEIVSPKNNPTTVYSGTVATTETFSSSTVVVIPTAICDGVRGLEYAVYDYTISSSMNEFCYPKNGQTDVFAFNEPAYFGSSDLDQSSPLFTGVFSSTDDIPEWASSWYLPPYPPQASDMASTYCACKVIVYQFFLRIPETDTYTLVVNNVDDVFFGWFGDKAISGWSNNNFDAYSYWHESPNMGLGTVGMGNFTVGNYPEGYFLPVRFVVANGAYIGGFDFYFTSDSTGPLATTSYSYTKTCTQQFLPFGQGNGGVNGPTEKLS.

The N-terminal stretch at 1 to 27 is a signal peptide; the sequence is MNFFLYFRTIFLIQLYFFNYSTFGCSA. N19 is a glycosylation site (N-linked (GlcNAc...) asparagine). Tandem repeats lie at residues 90–124 and 125–160. Residues 90 to 160 form a 2 X 36 AA approximate tandem repeats region; it reads GTVTETTISG…GTVEIVSPKN (71 aa). The region spanning 224-390 is the PA14 domain; sequence FNEPAYFGSS…GPLATTSYSY (167 aa). An N-linked (GlcNAc...) asparagine glycan is attached at N344.

It localises to the cell surface. Its function is as follows. May be involved in agglutination during conjugation or other aspects of colony formation. This is Putative cell agglutination protein SPAC1348.08c from Schizosaccharomyces pombe (strain 972 / ATCC 24843) (Fission yeast).